A 393-amino-acid chain; its full sequence is MGILGLSKLLYDRSPAAIRERELKNYFGRRIAIDASMTIYQFIIAMKGFQDGQGMELTNEAGEVTSHLNGLFARTLRMVDEGLRPIYVFDGKPPTLKASELQERRQRAEEAQQLFDTAKEEGNDELMEKMSKRTVRVSREQLEEAKKLLQLMGIPVVQAPSEAEAQCAELVKKKKAWAVATEDMDALTFGAPVMLRHLTYSEAKKRPIAEFHLDEILGITGLTMTQFIDLCILLGCDYVPKIPGIGPQKAWEGIKKHGDIETLLQSLDAGRHSVPEGFHYEEARQFFLKPEVTPAEEIEIQFREPDEEGLVKFLVEEKLFNKDRVLKGIQRLRNALTRKTQGRLDQFFTITRPVTKPNTCDAKAGVKRGHSAIALSGTLQQKGSSGHKKVVKK.

Residues 1–108 (MGILGLSKLL…SELQERRQRA (108 aa)) are N-domain. Asp-34 provides a ligand contact to Mg(2+). DNA is bound at residue Arg-74. Positions 90, 162, 164, 183, and 185 each coordinate Mg(2+). The tract at residues 126–257 (LMEKMSKRTV…QKAWEGIKKH (132 aa)) is I-domain. Position 162 (Glu-162) interacts with DNA. The DNA site is built by Gly-235 and Asp-237. Position 237 (Asp-237) interacts with Mg(2+). An interaction with PCNA region spans residues 340–348 (TQGRLDQFF).

This sequence belongs to the XPG/RAD2 endonuclease family. FEN1 subfamily. Interacts with PCNA. Three molecules of FEN1 bind to one PCNA trimer with each molecule binding to one PCNA monomer. PCNA stimulates the nuclease activity without altering cleavage specificity. Mg(2+) serves as cofactor. In terms of processing, phosphorylated. Phosphorylation upon DNA damage induces relocalization to the nuclear plasma.

It localises to the nucleus. The protein resides in the nucleolus. Its subcellular location is the nucleoplasm. The protein localises to the mitochondrion. In terms of biological role, structure-specific nuclease with 5'-flap endonuclease and 5'-3' exonuclease activities involved in DNA replication and repair. During DNA replication, cleaves the 5'-overhanging flap structure that is generated by displacement synthesis when DNA polymerase encounters the 5'-end of a downstream Okazaki fragment. It enters the flap from the 5'-end and then tracks to cleave the flap base, leaving a nick for ligation. Also involved in the long patch base excision repair (LP-BER) pathway, by cleaving within the apurinic/apyrimidinic (AP) site-terminated flap. Acts as a genome stabilization factor that prevents flaps from equilibrating into structures that lead to duplications and deletions. Also possesses 5'-3' exonuclease activity on nicked or gapped double-stranded DNA, and exhibits RNase H activity. Also involved in replication and repair of rDNA and in repairing mitochondrial DNA. The protein is Flap endonuclease 1 of Trypanosoma cruzi (strain CL Brener).